A 260-amino-acid polypeptide reads, in one-letter code: tRNA (guanine-N(7)-)-methyltransferase (260 aa).

The interval 1–37 (MIHDPNDAGLPDQLPTPSSEAENSPAGDTTPPEEALH) is disordered. 4 residues coordinate S-adenosyl-L-methionine: Glu-90, Glu-115, Asp-142, and Asp-165. Residue Asp-165 is part of the active site. Residues Lys-169, Asp-201, and 236–239 (TKFE) each bind substrate.

The protein belongs to the class I-like SAM-binding methyltransferase superfamily. TrmB family.

The catalysed reaction is guanosine(46) in tRNA + S-adenosyl-L-methionine = N(7)-methylguanosine(46) in tRNA + S-adenosyl-L-homocysteine. It functions in the pathway tRNA modification; N(7)-methylguanine-tRNA biosynthesis. Its function is as follows. Catalyzes the formation of N(7)-methylguanine at position 46 (m7G46) in tRNA. The chain is tRNA (guanine-N(7)-)-methyltransferase from Paraburkholderia xenovorans (strain LB400).